A 467-amino-acid polypeptide reads, in one-letter code: Hydroxyacid-oxoacid transhydrogenase, mitochondrial (467 aa).

Lys445 carries the N6-acetyllysine modification. Ser452 is subject to Phosphoserine.

It belongs to the iron-containing alcohol dehydrogenase family. Hydroxyacid-oxoacid transhydrogenase subfamily.

The protein localises to the mitochondrion. It catalyses the reaction (S)-3-hydroxybutanoate + 2-oxoglutarate = (R)-2-hydroxyglutarate + acetoacetate. The catalysed reaction is 4-hydroxybutanoate + 2-oxoglutarate = (R)-2-hydroxyglutarate + succinate semialdehyde. Its function is as follows. Catalyzes the cofactor-independent reversible oxidation of gamma-hydroxybutyrate (GHB) to succinic semialdehyde (SSA) coupled to reduction of 2-ketoglutarate (2-KG) to D-2-hydroxyglutarate (D-2-HG). L-3-hydroxybutyrate (L-3-OHB) is also a substrate for HOT when using 2-KG as hydrogen acceptor, resulting in the formation of D-2-HG. The sequence is that of Hydroxyacid-oxoacid transhydrogenase, mitochondrial (ADHFE1) from Pongo abelii (Sumatran orangutan).